A 124-amino-acid polypeptide reads, in one-letter code: Iron-sulfur cluster insertion protein ErpA (124 aa).

Iron-sulfur cluster contacts are provided by Cys-52, Cys-116, and Cys-118.

Belongs to the HesB/IscA family. Homodimer. Iron-sulfur cluster is required as a cofactor.

Its function is as follows. Required for insertion of 4Fe-4S clusters for at least IspG. This chain is Iron-sulfur cluster insertion protein ErpA, found in Vibrio atlanticus (strain LGP32) (Vibrio splendidus (strain Mel32)).